An 860-amino-acid chain; its full sequence is Leucine--tRNA ligase (860 aa).

The short motif at P42–H52 is the 'HIGH' region element. A 'KMSKS' region motif is present at residues K619–S623. Residue K622 participates in ATP binding.

This sequence belongs to the class-I aminoacyl-tRNA synthetase family.

The protein localises to the cytoplasm. The enzyme catalyses tRNA(Leu) + L-leucine + ATP = L-leucyl-tRNA(Leu) + AMP + diphosphate. The polypeptide is Leucine--tRNA ligase (Edwardsiella ictaluri (strain 93-146)).